Consider the following 131-residue polypeptide: Large ribosomal subunit protein bL17 (131 aa).

Belongs to the bacterial ribosomal protein bL17 family. As to quaternary structure, part of the 50S ribosomal subunit. Contacts protein L32.

In Herminiimonas arsenicoxydans, this protein is Large ribosomal subunit protein bL17.